The sequence spans 386 residues: Lipoyl synthase, mitochondrial (386 aa).

The disordered stretch occupies residues 1-48 (MHGRRHLAASLTRALTQAPSRSISSTPSLLQTLDPSVPSPSPPPAAEP). The span at 13 to 34 (RALTQAPSRSISSTPSLLQTLD) shows a compositional bias: polar residues. Pro residues predominate over residues 37-46 (VPSPSPPPAA). C113, C118, C124, C144, C148, C151, and S360 together coordinate [4Fe-4S] cluster. In terms of domain architecture, Radical SAM core spans 129 to 349 (ETGTATATIM…RALGVEMGFR (221 aa)).

The protein belongs to the radical SAM superfamily. Lipoyl synthase family. [4Fe-4S] cluster serves as cofactor.

The protein resides in the mitochondrion. It catalyses the reaction [[Fe-S] cluster scaffold protein carrying a second [4Fe-4S](2+) cluster] + N(6)-octanoyl-L-lysyl-[protein] + 2 oxidized [2Fe-2S]-[ferredoxin] + 2 S-adenosyl-L-methionine + 4 H(+) = [[Fe-S] cluster scaffold protein] + N(6)-[(R)-dihydrolipoyl]-L-lysyl-[protein] + 4 Fe(3+) + 2 hydrogen sulfide + 2 5'-deoxyadenosine + 2 L-methionine + 2 reduced [2Fe-2S]-[ferredoxin]. The protein operates within protein modification; protein lipoylation via endogenous pathway; protein N(6)-(lipoyl)lysine from octanoyl-[acyl-carrier-protein]: step 2/2. In terms of biological role, catalyzes the radical-mediated insertion of two sulfur atoms into the C-6 and C-8 positions of the octanoyl moiety bound to the lipoyl domains of lipoate-dependent enzymes, thereby converting the octanoylated domains into lipoylated derivatives. In Sorghum bicolor (Sorghum), this protein is Lipoyl synthase, mitochondrial.